A 95-amino-acid chain; its full sequence is Protein TRACHEARY ELEMENT DIFFERENTIATION-RELATED 6 (95 aa).

Residues methionine 1–threonine 3 are Extracellular-facing. The chain crosses the membrane as a helical span at residues isoleucine 4–leucine 24. The Cytoplasmic segment spans residues cysteine 25–alanine 95.

Interacts with the secondary cell wall (SCW)-related cellulose synthase complex. Accumulates in cells differentiating into tracheary element (TE) which undergo secondary cell wall (SCW) formation.

Its subcellular location is the cell membrane. It localises to the secreted. The protein resides in the cell wall. Involved in the secondary cell wall (SCW) formation of vessel elements (e.g. protoxylem and metaxylem), thus promoting tracheary element (TE) differentiation. In Zinnia elegans (Garden zinnia), this protein is Protein TRACHEARY ELEMENT DIFFERENTIATION-RELATED 6.